The sequence spans 311 residues: Bifunctional protein FolD (311 aa).

NADP(+) is bound by residues 180-182 (GRS), S209, and I250.

This sequence belongs to the tetrahydrofolate dehydrogenase/cyclohydrolase family. As to quaternary structure, homodimer.

It catalyses the reaction (6R)-5,10-methylene-5,6,7,8-tetrahydrofolate + NADP(+) = (6R)-5,10-methenyltetrahydrofolate + NADPH. The enzyme catalyses (6R)-5,10-methenyltetrahydrofolate + H2O = (6R)-10-formyltetrahydrofolate + H(+). It participates in one-carbon metabolism; tetrahydrofolate interconversion. Catalyzes the oxidation of 5,10-methylenetetrahydrofolate to 5,10-methenyltetrahydrofolate and then the hydrolysis of 5,10-methenyltetrahydrofolate to 10-formyltetrahydrofolate. The polypeptide is Bifunctional protein FolD (Haloquadratum walsbyi (strain DSM 16790 / HBSQ001)).